The primary structure comprises 448 residues: MDHQEPYSVQATAAIAAVITFLILFTIFGNALVILAVLTSRSLPAPQNLFLVSLAAADILVATLIIPFSLANELLGYWYFWRTWCEVYLALDVLFCTSSIVHLCAISLDRYWAVSRALEYNSKRTPRRIKCIILTVWLIAAVISLPPLIYKGDQGPSPRGPQCKINQEAWYILASSIGSFFAPCLIMILVYLRIYLIAKRSHRRGPRAKGGPGEGESKESRPSPGGAPASAKVPPLASPLSSTGEANGHPKPTGEKEEGETSEDPGARTLPPSWAALPTSGQGQKKAVVLAPAEEEAEEEEEEEGDECEPQAAPGLPASMCSPSLQQPQGSRVLATLRGQVLLGRGVGAVDGQWWRRRTQMTREKRFTFVLAVVIGVFVLCWFPFFFTYSLGAICPQHCKVPHGLFQFFFWIGYCNSSLNPVIYTIFNQDFRRAFRRILCRQWTQTAW.

Residues 1 to 12 (MDHQEPYSVQAT) lie on the Extracellular side of the membrane. A helical membrane pass occupies residues 13–38 (AAIAAVITFLILFTIFGNALVILAVL). The Cytoplasmic portion of the chain corresponds to 39 to 49 (TSRSLPAPQNL). A helical membrane pass occupies residues 50–75 (FLVSLAAADILVATLIIPFSLANELL). The Extracellular portion of the chain corresponds to 76–85 (GYWYFWRTWC). C85 and C163 are joined by a disulfide. The helical transmembrane segment at 86-108 (EVYLALDVLFCTSSIVHLCAISL) threads the bilayer. At 109 to 130 (DRYWAVSRALEYNSKRTPRRIK) the chain is on the cytoplasmic side. The helical transmembrane segment at 131–153 (CIILTVWLIAAVISLPPLIYKGD) threads the bilayer. Residues 154 to 168 (QGPSPRGPQCKINQE) lie on the Extracellular side of the membrane. A helical transmembrane segment spans residues 169 to 192 (AWYILASSIGSFFAPCLIMILVYL). Residues 193–370 (RIYLIAKRSH…MTREKRFTFV (178 aa)) are Cytoplasmic-facing. Residues 203 to 326 (RRGPRAKGGP…PASMCSPSLQ (124 aa)) are disordered. Positions 293–309 (AEEEAEEEEEEEGDECE) are enriched in acidic residues. A helical membrane pass occupies residues 371-394 (LAVVIGVFVLCWFPFFFTYSLGAI). At 395 to 403 (CPQHCKVPH) the chain is on the extracellular side. Residues 404 to 427 (GLFQFFFWIGYCNSSLNPVIYTIF) form a helical membrane-spanning segment. The Cytoplasmic portion of the chain corresponds to 428 to 448 (NQDFRRAFRRILCRQWTQTAW). Residue C440 is the site of S-palmitoyl cysteine attachment.

The protein belongs to the G-protein coupled receptor 1 family. Adrenergic receptor subfamily. ADRA2B sub-subfamily. As to quaternary structure, interacts with RAB26. Interacts with PPP1R9B.

It localises to the cell membrane. In terms of biological role, alpha-2 adrenergic receptors mediate the catecholamine-induced inhibition of adenylate cyclase through the action of G proteins. The protein is Alpha-2B adrenergic receptor (ADRA2B) of Cavia porcellus (Guinea pig).